Reading from the N-terminus, the 142-residue chain is MASLRHRVRAIALQILFELDATDHPPDQVVGRRLEEEQLPPEGERFLRRLVFGAWEHAAHLDRIIEEAAPNWPVSQMPGVDKAILRIALFEALIDKEEKTPLKAIINEAVELAKQYGSDNSSRFVNGVLGTVVSRYRERSKG.

It belongs to the NusB family.

Functionally, involved in transcription antitermination. Required for transcription of ribosomal RNA (rRNA) genes. Binds specifically to the boxA antiterminator sequence of the ribosomal RNA (rrn) operons. This chain is Transcription antitermination protein NusB, found in Roseiflexus castenholzii (strain DSM 13941 / HLO8).